The primary structure comprises 418 residues: Gamma-glutamyl phosphate reductase (418 aa).

This sequence belongs to the gamma-glutamyl phosphate reductase family.

It localises to the cytoplasm. It catalyses the reaction L-glutamate 5-semialdehyde + phosphate + NADP(+) = L-glutamyl 5-phosphate + NADPH + H(+). Its pathway is amino-acid biosynthesis; L-proline biosynthesis; L-glutamate 5-semialdehyde from L-glutamate: step 2/2. Catalyzes the NADPH-dependent reduction of L-glutamate 5-phosphate into L-glutamate 5-semialdehyde and phosphate. The product spontaneously undergoes cyclization to form 1-pyrroline-5-carboxylate. The chain is Gamma-glutamyl phosphate reductase from Colwellia psychrerythraea (strain 34H / ATCC BAA-681) (Vibrio psychroerythus).